We begin with the raw amino-acid sequence, 536 residues long: Protein Rep68 (536 aa).

A PV NS1-Nuc domain is found at 1 to 199 (MPGFYEIVIK…AQHLTHVSQT (199 aa)). Residues Glu-83, His-90, and His-92 each contribute to the a divalent metal cation site. The short motif at 90-92 (HMH) is the RCR-2 element. The active-site For nuclease activity is Tyr-156. The RCR-3 motif lies at 156–160 (YLLPK). Residues 196 to 211 (VSQTQEQNKENQNPNS) show a composition bias toward polar residues. The segment at 196 to 216 (VSQTQEQNKENQNPNSDAPVI) is disordered. The SF3 helicase domain maps to 308 to 463 (DPQYAASVFL…LDHDFGKVTK (156 aa)). ATP is bound at residue 334 to 341 (GPATTGKT). The disordered stretch occupies residues 488 to 536 (KGGAKKRPAPSDADISEPKRVRESVAQPSTSDAEASINYADRLARGHSL).

In terms of assembly, interacts with host TOPORS. Interacts with host KCTD5. Requires a divalent metal cation as cofactor.

Its subcellular location is the host nucleus. It catalyses the reaction ATP + H2O = ADP + phosphate + H(+). Functionally, plays an essential role in the initiation of viral DNA synthesis. Binds specifically to an inverted terminal repeat element (ITR) on the 3' and 5' ends of the viral DNA, where it cleaves a site specifically to generate a priming site for initiation of the synthesis of a complementary strand. Also plays a role as transcriptional regulator, DNA helicase and as key factor in site-specific integration of the viral genome. Inhibits the host cell cycle G1/S and G2/M transitions. These arrests may provide essential cellular factors for viral DNA replication. This Mammalia (AAV-2) protein is Protein Rep68 (Rep68).